The chain runs to 362 residues: Methionine import ATP-binding protein MetN (362 aa).

In terms of domain architecture, ABC transporter spans 23 to 258; the sequence is VRLTDVKRRF…PQAEITGSLL (236 aa). Residue 55 to 62 coordinates ATP; sequence GRSGAGKS.

It belongs to the ABC transporter superfamily. Methionine importer (TC 3.A.1.24) family. The complex is composed of two ATP-binding proteins (MetN), two transmembrane proteins (MetI) and a solute-binding protein (MetQ).

It is found in the cell inner membrane. The catalysed reaction is L-methionine(out) + ATP + H2O = L-methionine(in) + ADP + phosphate + H(+). It carries out the reaction D-methionine(out) + ATP + H2O = D-methionine(in) + ADP + phosphate + H(+). In terms of biological role, part of the ABC transporter complex MetNIQ involved in methionine import. Responsible for energy coupling to the transport system. This is Methionine import ATP-binding protein MetN from Rhizobium johnstonii (strain DSM 114642 / LMG 32736 / 3841) (Rhizobium leguminosarum bv. viciae).